We begin with the raw amino-acid sequence, 429 residues long: Glutamate-1-semialdehyde 2,1-aminomutase 1 (429 aa).

An N6-(pyridoxal phosphate)lysine modification is found at lysine 268.

Belongs to the class-III pyridoxal-phosphate-dependent aminotransferase family. HemL subfamily. As to quaternary structure, homodimer. Pyridoxal 5'-phosphate serves as cofactor.

The protein resides in the cytoplasm. It catalyses the reaction (S)-4-amino-5-oxopentanoate = 5-aminolevulinate. It participates in porphyrin-containing compound metabolism; protoporphyrin-IX biosynthesis; 5-aminolevulinate from L-glutamyl-tRNA(Glu): step 2/2. This Staphylococcus haemolyticus (strain JCSC1435) protein is Glutamate-1-semialdehyde 2,1-aminomutase 1.